A 104-amino-acid chain; its full sequence is Protein EPIDERMAL PATTERNING FACTOR 1 (104 aa).

Positions 1–20 (MKSLLLLAFFLSFFFGSLLA) are cleaved as a signal peptide. Intrachain disulfides connect Cys60–Cys94, Cys64–Cys70, Cys67–Cys96, and Cys79–Cys88. Asn98 is a glycosylation site (N-linked (GlcNAc...) asparagine).

It belongs to the plant cysteine rich small secretory peptide family. Epidermal patterning factor subfamily. As to quaternary structure, interacts with ERECTA and ERL1, but not with TMM. As to expression, expressed in shoots, but not in roots. Mostly localized in developing leaves, specifically in meristemoids, guard mother cells (GMCs), and young guard cells.

It localises to the secreted. Its function is as follows. Controls stomatal patterning. Regulates asymmetric cell division during guard cell differentiation. Mediates stomatal development inhibition. Not cleaved by the protease CRSP (AC Q9LNU1). MEPF1: mobile signal controlling stomatal development in a non-cell-autonomous manner. Uses ERL1 as major receptor. May act by competing with somatogen (AC Q9SV72) for the same receptor, TMM (AC Q9SSD1). The polypeptide is Protein EPIDERMAL PATTERNING FACTOR 1 (Arabidopsis thaliana (Mouse-ear cress)).